Consider the following 420-residue polypeptide: Serine hydroxymethyltransferase (420 aa).

Residues Leu-121 and 125–127 each bind (6S)-5,6,7,8-tetrahydrofolate; that span reads GHL. Lys-230 is modified (N6-(pyridoxal phosphate)lysine). (6S)-5,6,7,8-tetrahydrofolate-binding positions include Glu-246 and 354 to 356; that span reads SPF.

It belongs to the SHMT family. As to quaternary structure, homodimer. The cofactor is pyridoxal 5'-phosphate.

The protein resides in the cytoplasm. The enzyme catalyses (6R)-5,10-methylene-5,6,7,8-tetrahydrofolate + glycine + H2O = (6S)-5,6,7,8-tetrahydrofolate + L-serine. It participates in one-carbon metabolism; tetrahydrofolate interconversion. The protein operates within amino-acid biosynthesis; glycine biosynthesis; glycine from L-serine: step 1/1. In terms of biological role, catalyzes the reversible interconversion of serine and glycine with tetrahydrofolate (THF) serving as the one-carbon carrier. This reaction serves as the major source of one-carbon groups required for the biosynthesis of purines, thymidylate, methionine, and other important biomolecules. Also exhibits THF-independent aldolase activity toward beta-hydroxyamino acids, producing glycine and aldehydes, via a retro-aldol mechanism. The sequence is that of Serine hydroxymethyltransferase from Rickettsia canadensis (strain McKiel).